The following is a 160-amino-acid chain: SsrA-binding protein (160 aa).

This sequence belongs to the SmpB family.

It localises to the cytoplasm. Its function is as follows. Required for rescue of stalled ribosomes mediated by trans-translation. Binds to transfer-messenger RNA (tmRNA), required for stable association of tmRNA with ribosomes. tmRNA and SmpB together mimic tRNA shape, replacing the anticodon stem-loop with SmpB. tmRNA is encoded by the ssrA gene; the 2 termini fold to resemble tRNA(Ala) and it encodes a 'tag peptide', a short internal open reading frame. During trans-translation Ala-aminoacylated tmRNA acts like a tRNA, entering the A-site of stalled ribosomes, displacing the stalled mRNA. The ribosome then switches to translate the ORF on the tmRNA; the nascent peptide is terminated with the 'tag peptide' encoded by the tmRNA and targeted for degradation. The ribosome is freed to recommence translation, which seems to be the essential function of trans-translation. In Marinobacter nauticus (strain ATCC 700491 / DSM 11845 / VT8) (Marinobacter aquaeolei), this protein is SsrA-binding protein.